Consider the following 334-residue polypeptide: Protein-methionine-sulfoxide reductase catalytic subunit MsrP (334 aa).

The segment at residues 1-44 is a signal peptide (tat-type signal); the sequence is MKKNQFLKESDVTAESVFFMKRRQVLKALGISAAALSLPHAAHA. Residues asparagine 88, 91 to 92, cysteine 146, threonine 181, asparagine 233, arginine 238, and 249 to 251 contribute to the Mo-molybdopterin site; these read YE and GIK.

It belongs to the MsrP family. In terms of assembly, heterodimer of a catalytic subunit (MsrP) and a heme-binding subunit (MsrQ). Mo-molybdopterin is required as a cofactor. Predicted to be exported by the Tat system. The position of the signal peptide cleavage has not been experimentally proven.

Its subcellular location is the periplasm. The catalysed reaction is L-methionyl-[protein] + a quinone + H2O = L-methionyl-(S)-S-oxide-[protein] + a quinol. It catalyses the reaction L-methionyl-[protein] + a quinone + H2O = L-methionyl-(R)-S-oxide-[protein] + a quinol. Its function is as follows. Part of the MsrPQ system that repairs oxidized periplasmic proteins containing methionine sulfoxide residues (Met-O), using respiratory chain electrons. Thus protects these proteins from oxidative-stress damage caused by reactive species of oxygen and chlorine generated by the host defense mechanisms. MsrPQ is essential for the maintenance of envelope integrity under bleach stress, rescuing a wide series of structurally unrelated periplasmic proteins from methionine oxidation, including the primary periplasmic chaperone SurA and the lipoprotein Pal. The catalytic subunit MsrP is non-stereospecific, being able to reduce both (R-) and (S-) diastereoisomers of methionine sulfoxide. The polypeptide is Protein-methionine-sulfoxide reductase catalytic subunit MsrP (Escherichia coli O81 (strain ED1a)).